Consider the following 199-residue polypeptide: Superoxide dismutase [Mn] (199 aa).

Positions 27, 76, 160, and 164 each coordinate Mn(2+).

The protein belongs to the iron/manganese superoxide dismutase family. The cofactor is Mn(2+).

It carries out the reaction 2 superoxide + 2 H(+) = H2O2 + O2. In terms of biological role, destroys superoxide anion radicals which are normally produced within the cells and which are toxic to biological systems. The polypeptide is Superoxide dismutase [Mn] (sodA) (Corynebacterium diphtheriae (strain ATCC 700971 / NCTC 13129 / Biotype gravis)).